Here is a 257-residue protein sequence, read N- to C-terminus: Short chain dehydrogenase helC (257 aa).

Positions 1–22 (MNTAIITGAAQGVGLCIAEALA) are cleaved as a signal peptide. Residue V13 coordinates NADP(+). N46 carries an N-linked (GlcNAc...) asparagine glycan. Residues D60 and N87 each coordinate NADP(+). The N-linked (GlcNAc...) asparagine glycan is linked to N110. Positions 154, 158, 185, and 187 each coordinate NADP(+). Catalysis depends on Y154, which acts as the Proton acceptor. Catalysis depends on K158, which acts as the Lowers pKa of active site Tyr.

The protein belongs to the short-chain dehydrogenases/reductases (SDR) family.

It participates in mycotoxin biosynthesis. Functionally, short chain dehydrogenase; part of the gene cluster that mediates the biosynthesis of helvolic acid, an antibacterial nortriterpenoid. Protostadienol synthase helA cyclizes (3S)-oxidosqualene to (17Z)-protosta-17(20),24-dien-3-beta-ol (protostadienol). The synthesis of protostadienol is followed by several steps of monooxygenation, dehydrogenation, and acyl transfer to yield the final helvolic acid. Following the cyclization to the tetracyclic protostadienol by helA, cytochrome P450 monooxygenases helB1-mediated and helB2-mediated oxidation at C-4 and C-16, acyltransferase helD2-dependent acetylation of 16-OH, oxidation of C-21 by cytochrome P450 monooxygenase helB4, and short chain dehydrogenase helC-dependent oxidative decarboxylation yield the fusidane skeleton. This intermediate is further modified in three additional steps mediated by the cytochrome P450 monooxygenase helB3, the acyltransferase helD1, and the 3-ketosteroid 1-dehydrogenase helE to give helvolic acid. Compared with the late stages in the biosynthesis of helvolic acid, enzymes involved in the early stage modifications act in a relatively strict order. The hydroxylation of C-16 by helB1 and subsequent acetylation by helD2 should occur before the helB3-mediated oxidation of C-21. C-4 demethylation in fusidane-type antibiotics proceeds in an unusual manner though it is also achieved by oxidative decarboxylation. The methyl group at C-4 beta position is oxidized by helB1 and subsequently removed by the short chain dehydrogenase helC. The chain is Short chain dehydrogenase helC from Aspergillus fumigatus (strain ATCC MYA-4609 / CBS 101355 / FGSC A1100 / Af293) (Neosartorya fumigata).